Reading from the N-terminus, the 587-residue chain is NADH-quinone oxidoreductase subunit C/D (587 aa).

The tract at residues 1–178 (MAAPTTEHAE…EPFSLPDDVQ (178 aa)) is NADH dehydrogenase I subunit C. The tract at residues 202–587 (DFLFLNLGPN…IDFVMADVDR (386 aa)) is NADH dehydrogenase I subunit D.

It in the N-terminal section; belongs to the complex I 30 kDa subunit family. This sequence in the C-terminal section; belongs to the complex I 49 kDa subunit family. As to quaternary structure, NDH-1 is composed of 13 different subunits. Subunits NuoB, CD, E, F, and G constitute the peripheral sector of the complex.

The protein localises to the cell inner membrane. The catalysed reaction is a quinone + NADH + 5 H(+)(in) = a quinol + NAD(+) + 4 H(+)(out). In terms of biological role, NDH-1 shuttles electrons from NADH, via FMN and iron-sulfur (Fe-S) centers, to quinones in the respiratory chain. The immediate electron acceptor for the enzyme in this species is believed to be ubiquinone. Couples the redox reaction to proton translocation (for every two electrons transferred, four hydrogen ions are translocated across the cytoplasmic membrane), and thus conserves the redox energy in a proton gradient. This is NADH-quinone oxidoreductase subunit C/D from Methylococcus capsulatus (strain ATCC 33009 / NCIMB 11132 / Bath).